Consider the following 221-residue polypeptide: Serine/arginine-rich splicing factor 2 (221 aa).

N-acetylserine is present on S2. S2 bears the Phosphoserine mark. Residues 14–92 (TSLKVDNLTY…RELRVQMARY (79 aa)) form the RRM domain. Phosphothreonine occurs at positions 22 and 25. S26 is modified (phosphoserine). N6-acetyllysine is present on K52. The interval 92 to 221 (YGRPPDSHHS…SPEEEGAVSS (130 aa)) is disordered. Composition is skewed to basic residues over residues 117–171 (RRSR…RSKS) and 179–189 (SRSRSRSRSRS). 7 positions are modified to phosphoserine: S189, S191, S204, S206, S208, S212, and S220. A compositionally biased stretch (acidic residues) spans 212-221 (SPEEEGAVSS).

Belongs to the splicing factor SR family. In vitro, self-associates and binds SRSF1/SFRS1 (ASF/SF2), SNRP70 and U2AF1 but not U2AF2. Binds SREK1/SFRS12. Interacts with CCNL1 and CCNL2. Interacts with SCAF11. Interacts with ZRSR2/U2AF1-RS2. Interacts with CCDC55 (via C-terminus). Interacts with BRDT. In terms of processing, extensively phosphorylated on serine residues in the RS domain. Phosphorylated by SRPK2 and this causes its redistribution from the nuclear speckle to nucleoplasm and controls cell fate decision in response to cisplatin treatment. KAT5/TIP60 inhibits its phosphorylation by preventing SRPK2 nuclear translocation. Post-translationally, acetylation on Lys-52 by KAT5/TIP60 promotes its proteasomal degradation. This effect is counterbalanced by HDAC6, which positively controls SRSF2 protein level by deacetylating it and preventing its proteasomal degradation.

Its subcellular location is the nucleus. The protein resides in the nucleoplasm. It is found in the nucleus speckle. Functionally, necessary for the splicing of pre-mRNA. It is required for formation of the earliest ATP-dependent splicing complex and interacts with spliceosomal components bound to both the 5'- and 3'-splice sites during spliceosome assembly. It also is required for ATP-dependent interactions of both U1 and U2 snRNPs with pre-mRNA. Interacts with other spliceosomal components, via the RS domains, to form a bridge between the 5'- and 3'-splice site binding components, U1 snRNP and U2AF. Binds to purine-rich RNA sequences, either 5'-AGSAGAGTA-3' (S=C or G) or 5'-GTTCGAGTA-3'. Can bind to beta-globin mRNA and commit it to the splicing pathway. The phosphorylated form (by SRPK2) is required for cellular apoptosis in response to cisplatin treatment. The polypeptide is Serine/arginine-rich splicing factor 2 (SRSF2) (Pan troglodytes (Chimpanzee)).